Consider the following 257-residue polypeptide: Metallo-beta-lactamase type 2 (257 aa).

An N-terminal signal peptide occupies residues 1 to 30; the sequence is MKKNTLLKVGLCVSLLGTTQFVSTISSVQA. Residues His-116, His-118, Asp-120, His-179, and Cys-198 each coordinate Zn(2+). Substrate-binding residues include Lys-201 and Asn-210. His-240 is a binding site for Zn(2+).

It belongs to the metallo-beta-lactamase superfamily. Class-B beta-lactamase family. In terms of assembly, monomer. Zn(2+) is required as a cofactor.

It is found in the periplasm. It carries out the reaction a beta-lactam + H2O = a substituted beta-amino acid. Confers resistance to the different beta-lactams antibiotics (penicillin, cephalosporin and carbapenem) via the hydrolysis of the beta-lactam ring. In Bacillus sp. (strain 170), this protein is Metallo-beta-lactamase type 2.